The sequence spans 414 residues: Probable isoprenylcysteine alpha-carbonyl methylesterase ICME (414 aa).

A disordered region spans residues Met1–Thr54. The next 2 helical transmembrane spans lie at Leu90–Tyr110 and Val145–Leu165. Substrate-binding positions include Gly151–Ala153 and Gln222–Ala224. Residues Ser223, Asp323, and His355 contribute to the active site.

Belongs to the AB hydrolase superfamily. Isoprenylcysteine methylesterase family.

The protein localises to the endoplasmic reticulum membrane. The protein resides in the golgi apparatus membrane. The catalysed reaction is [protein]-C-terminal S-[(2E,6E)-farnesyl]-L-cysteine methyl ester + H2O = [protein]-C-terminal S-[(2E,6E)-farnesyl]-L-cysteine + methanol + H(+). Catalyzes the demethylation of isoprenylcysteine methylesters. The sequence is that of Probable isoprenylcysteine alpha-carbonyl methylesterase ICME (IMCE) from Oryza sativa subsp. japonica (Rice).